Here is a 360-residue protein sequence, read N- to C-terminus: MSSSETKGRNEEDVAEIKKAIATGAVKDPSNLSAIPPIFVVSGANFSMNFLLLCIQSSVCCACVFAVKKLGIISFRDFDMKDAKMWFPISFLLVSVIYTGSKSLQYLSIPVYTIFKNLTIILIAYGEVLWFGGRVTALTFVSFIFMVISSIIAAWSDVQSALASSIPGASSGVSVGAMQSLFGALRGLNVGYFWMLVNCLTSAAYVLSMRKRIKSTGFSDWDTMFYNNLLSIPVLAVFSLIAEDWGRENLNRNFPAETRNFLLFAIAFSGAAAVGISYTTAWCVRVTSSTTYSMVGALNKLPVAASGMLFFGDPVTVGSVSAVGVGFFAGIVYAVAKNNQKKNERRQAADAIIPMASRKP.

The Cytoplasmic segment spans residues 1–49; the sequence is MSSSETKGRNEEDVAEIKKAIATGAVKDPSNLSAIPPIFVVSGANFSMN. A helical transmembrane segment spans residues 50-67; that stretch reads FLLLCIQSSVCCACVFAV. Over 68-84 the chain is Lumenal; it reads KKLGIISFRDFDMKDAK. The helical transmembrane segment at 85 to 105 threads the bilayer; the sequence is MWFPISFLLVSVIYTGSKSLQ. The Cytoplasmic segment spans residues 106–110; sequence YLSIP. A helical transmembrane segment spans residues 111-131; that stretch reads VYTIFKNLTIILIAYGEVLWF. The Lumenal segment spans residues 132 to 134; that stretch reads GGR. A helical membrane pass occupies residues 135-155; the sequence is VTALTFVSFIFMVISSIIAAW. At 156 to 164 the chain is on the cytoplasmic side; that stretch reads SDVQSALAS. The chain crosses the membrane as a helical span at residues 165 to 185; sequence SIPGASSGVSVGAMQSLFGAL. Residue R186 is a topological domain, lumenal. Residues 187-207 form a helical membrane-spanning segment; the sequence is GLNVGYFWMLVNCLTSAAYVL. Topologically, residues 208–220 are cytoplasmic; that stretch reads SMRKRIKSTGFSD. Residues 221-241 form a helical membrane-spanning segment; sequence WDTMFYNNLLSIPVLAVFSLI. Residues 242–260 lie on the Lumenal side of the membrane; sequence AEDWGRENLNRNFPAETRN. Residues 261 to 281 traverse the membrane as a helical segment; sequence FLLFAIAFSGAAAVGISYTTA. Residues 282-291 lie on the Cytoplasmic side of the membrane; that stretch reads WCVRVTSSTT. Residues 292 to 312 form a helical membrane-spanning segment; the sequence is YSMVGALNKLPVAASGMLFFG. Residues 313–314 lie on the Lumenal side of the membrane; sequence DP. The chain crosses the membrane as a helical span at residues 315–335; that stretch reads VTVGSVSAVGVGFFAGIVYAV. Topologically, residues 336–360 are cytoplasmic; that stretch reads AKNNQKKNERRQAADAIIPMASRKP.

This sequence belongs to the TPT transporter family. SLC35D subfamily. In terms of assembly, homooligomer.

It localises to the golgi apparatus membrane. It is found in the cytoplasmic vesicle membrane. The protein localises to the endoplasmic reticulum membrane. Functionally, involved in the import of GDP-mannose from the cytoplasm into the Golgi lumen. The protein is GDP-mannose transporter (VRG4) of Coprinopsis cinerea (strain Okayama-7 / 130 / ATCC MYA-4618 / FGSC 9003) (Inky cap fungus).